Reading from the N-terminus, the 380-residue chain is 3-dehydroquinate synthase (380 aa).

Residues 100–104 (GAASD), 124–125 (TT), Lys137, and Lys146 each bind NAD(+). Positions 179, 251, and 267 each coordinate Zn(2+). A disordered region spans residues 320–343 (YMQRDKKNMQSNDTDSDKDSREMP).

The protein belongs to the sugar phosphate cyclases superfamily. Dehydroquinate synthase family. It depends on NAD(+) as a cofactor. The cofactor is Co(2+). Requires Zn(2+) as cofactor.

The protein localises to the cytoplasm. It carries out the reaction 7-phospho-2-dehydro-3-deoxy-D-arabino-heptonate = 3-dehydroquinate + phosphate. It functions in the pathway metabolic intermediate biosynthesis; chorismate biosynthesis; chorismate from D-erythrose 4-phosphate and phosphoenolpyruvate: step 2/7. Catalyzes the conversion of 3-deoxy-D-arabino-heptulosonate 7-phosphate (DAHP) to dehydroquinate (DHQ). The polypeptide is 3-dehydroquinate synthase (Tropheryma whipplei (strain Twist) (Whipple's bacillus)).